The following is a 463-amino-acid chain: Senescence/dehydration-associated protein At3g51250 (463 aa).

A compositionally biased stretch (basic and acidic residues) spans 1-12 (MNPSHGGDDKQR). Disordered regions lie at residues 1 to 31 (MNPSHGGDDKQRPAMYPQVDQSIPDNPFAST), 52 to 74 (PNLFPDHGDASNDQSPSAPPQAT), and 146 to 172 (IHPPKEKGQGSGSDSDDEQGQKSKSKS). Polar residues predominate over residues 19-31 (VDQSIPDNPFAST). A Senescence domain is found at 269–437 (IASGSGKLIR…AWVAFKIRKA (169 aa)).

The protein is Senescence/dehydration-associated protein At3g51250 of Arabidopsis thaliana (Mouse-ear cress).